The following is a 279-amino-acid chain: MSSSSASKLLGSVLVFAMISVQIVFIHCVMSLNETNSLNQTNVYLHHICINSQGTYKPGSPYEENLNRVIRAISITISNYGFVHGSNGDAPNTVFGKLQCRGDSYLSKCRSCLTTAFSELRGRCPKNKGRIIWYDNCLLEISPINSLGKIDYEYNFYMYNEKDVNGDTNLFNKNTRALLYRLKEKATSKENNNGKQDLPEIGGKRLGMKMLYATGEKSLRTMKLYGMVQCTKDLSIKDCIVCLNWIIAKLPTCCSNKQGGRVLSTSCNFRYELYRFVKT.

Residues 1–31 form the signal peptide; that stretch reads MSSSSASKLLGSVLVFAMISVQIVFIHCVMS. Gnk2-homologous domains are found at residues 44 to 146 and 152 to 276; these read YLHH…PINS and YEYN…LYRF.

It belongs to the cysteine-rich repeat secretory protein family.

It localises to the secreted. The protein is Putative cysteine-rich repeat secretory protein 22 (CRRSP22) of Arabidopsis thaliana (Mouse-ear cress).